Reading from the N-terminus, the 487-residue chain is Lysophospholipid acyltransferase 5 (487 aa).

Position 2 is an N-acetylalanine (alanine 2). A run of 6 helical transmembrane segments spans residues 44–64 (LIFSIFLGYPLALFYRHYLFY), 67–87 (SYLIHLFHAFSGLSIAYFNFG), 111–131 (ITAVFTTLCFQMAYLLAGYYY), 178–198 (ILGVPSLLEVAGFSYFYGAFL), 236–256 (LGLVYLVGYTLLSPHITEDYL), and 285–305 (VTCWLVTEGVCILSGLGFNGF). N-linked (GlcNAc...) asparagine glycosylation is present at asparagine 308. Residues asparagine 338 and histidine 374 contribute to the active site. 3 helical membrane-spanning segments follow: residues 364–384 (GLSLLFLALWHGLHSGYLICF), 422–442 (LVQQTIHWLFMGYSMTAFCLF), and 453–473 (SIYFLGHVFFLSLLFTLPYVY). Positions 484–487 (KKRE) match the Di-lysine motif motif.

The protein belongs to the membrane-bound acyltransferase family.

The protein resides in the endoplasmic reticulum membrane. The enzyme catalyses a 1-acyl-sn-glycero-3-phosphocholine + an acyl-CoA = a 1,2-diacyl-sn-glycero-3-phosphocholine + CoA. The catalysed reaction is a 1-acyl-sn-glycero-3-phosphoethanolamine + an acyl-CoA = a 1,2-diacyl-sn-glycero-3-phosphoethanolamine + CoA. It catalyses the reaction a 1-acyl-sn-glycero-3-phospho-L-serine + an acyl-CoA = a 1,2-diacyl-sn-glycero-3-phospho-L-serine + CoA. It carries out the reaction (9Z,12Z)-octadecadienoyl-CoA + a 1-acyl-sn-glycero-3-phosphocholine = 1-acyl-2-(9Z,12Z)-octadecadienoyl-sn-glycero-3-phosphocholine + CoA. The enzyme catalyses (5Z,8Z,11Z,14Z)-eicosatetraenoyl-CoA + a 1-acyl-sn-glycero-3-phosphocholine = 1-acyl-2-(5Z,8Z,11Z,14Z-eicosatetraenoyl)-sn-glycero-3-phosphocholine + CoA. The catalysed reaction is dodecanoyl-CoA + 1-hexadecanoyl-sn-glycero-3-phosphocholine = 1-hexadecanoyl-2-dodecanoyl-sn-glycero-3-phosphocholine + CoA. It catalyses the reaction octadecanoyl-CoA + 1-hexadecanoyl-sn-glycero-3-phosphocholine = 1-hexadecanoyl-2-octadecanoyl-sn-glycero-3-phosphocholine + CoA. It carries out the reaction 1-dodecanoyl-sn-glycero-3-phosphocholine + hexadecanoyl-CoA = 1-dodecanoyl-2-hexadecanoyl-sn-glycero-3-phosphocholine + CoA. The enzyme catalyses 1-tetradecanoyl-sn-glycero-3-phosphocholine + hexadecanoyl-CoA = 1-tetradecanoyl-2-hexadecanoyl-sn-glycero-3-phosphocholine + CoA. The catalysed reaction is 1-hexadecanoyl-sn-glycero-3-phosphocholine + hexadecanoyl-CoA = 1,2-dihexadecanoyl-sn-glycero-3-phosphocholine + CoA. It catalyses the reaction 1-octadecanoyl-sn-glycero-3-phosphocholine + hexadecanoyl-CoA = 1-octadecanoyl-2-hexadecanoyl-sn-glycero-3-phosphocholine + CoA. It carries out the reaction 1-(9Z-octadecenoyl)-sn-glycero-3-phosphocholine + hexadecanoyl-CoA = 1-(9Z-octadecenoyl)-2-hexadecanoyl-sn-glycero-3-phosphocholine + CoA. The enzyme catalyses (9Z)-hexadecenoyl-CoA + 1-hexadecanoyl-sn-glycero-3-phosphocholine = 1-hexadecanoyl-2-(9Z-hexadecenoyl)-sn-glycero-3-phosphocholine + CoA. The catalysed reaction is 1-hexadecanoyl-sn-glycero-3-phosphocholine + (9Z)-octadecenoyl-CoA = 1-hexadecanoyl-2-(9Z-octadecenoyl)-sn-glycero-3-phosphocholine + CoA. It catalyses the reaction (9Z,12Z)-octadecadienoyl-CoA + 1-hexadecanoyl-sn-glycero-3-phosphocholine = 1-hexadecanoyl-2-(9Z,12Z-octadecadienoyl)-sn-glycero-3-phosphocholine + CoA. It carries out the reaction 1-dodecanoyl-sn-glycero-3-phosphocholine + (5Z,8Z,11Z,14Z)-eicosatetraenoyl-CoA = 1-dodecanoyl-2-(5Z,8Z,11Z,14Z)-eicosatetraenoyl-sn-glycero-3-phosphocholine + CoA. The enzyme catalyses (5Z,8Z,11Z,14Z)-eicosatetraenoyl-CoA + 1-hexadecanoyl-sn-glycero-3-phosphocholine = 1-hexadecanoyl-2-(5Z,8Z,11Z,14Z-eicosatetraenoyl)-sn-glycero-3-phosphocholine + CoA. The catalysed reaction is 1-octadecanoyl-sn-glycero-3-phosphocholine + (5Z,8Z,11Z,14Z)-eicosatetraenoyl-CoA = 1-octadecanoyl-2-(5Z,8Z,11Z,14Z-eicosatetraenoyl)-sn-glycero-3-phosphocholine + CoA. It catalyses the reaction 1-eicosanoyl-sn-glycero-3-phosphocholine + (5Z,8Z,11Z,14Z)-eicosatetraenoyl-CoA = 1-eicosanoyl-2-(5Z,8Z,11Z,14Z)-eicosatetraenoyl-sn-glycero-3-phosphocholine + CoA. It carries out the reaction 1-(9Z-octadecenoyl)-sn-glycero-3-phosphocholine + (9Z)-octadecenoyl-CoA = 1,2-di-(9Z-octadecenoyl)-sn-glycero-3-phosphocholine + CoA. The enzyme catalyses 1-(9Z-octadecenoyl)-sn-glycero-3-phosphocholine + (9Z,12Z)-octadecadienoyl-CoA = 1-(9Z)-octadecenoyl-2-(9Z,12Z)-octadecadienoyl-sn-glycero-3-phosphocholine + CoA. The catalysed reaction is 1-(9Z-octadecenoyl)-sn-glycero-3-phosphocholine + (5Z,8Z,11Z,14Z)-eicosatetraenoyl-CoA = 1-(9Z)-octadecenoyl-2-(5Z,8Z,11Z,14Z)-icosatetraenoyl-sn-glycero-3-phosphocholine + CoA. It catalyses the reaction a 1-acyl-sn-glycero-3-phosphoethanolamine + (9Z,12Z)-octadecadienoyl-CoA = 1-acyl-2-(9Z,12Z)-octadecadienoyl-sn-glycero-3-phosphoethanolamine + CoA. It carries out the reaction 1-(9Z-octadecenoyl)-sn-glycero-3-phosphoethanolamine + (9Z,12Z)-octadecadienoyl-CoA = 1-(9Z)-octadecenoyl-2-(9Z,12Z)-octadecadienoyl-sn-glycero-3-phosphoethanolamine + CoA. The enzyme catalyses 1-(10Z-heptadecenoyl)-sn-glycero-3-phosphoethanolamine + (9Z,12Z)-octadecadienoyl-CoA = 1-(10Z-heptadecenoyl)-2-(9Z,12Z-octadecadienoyl)-sn-glycero-3-phosphoethanolamine + CoA. The catalysed reaction is a 1-acyl-sn-glycero-3-phosphoethanolamine + (5Z,8Z,11Z,14Z)-eicosatetraenoyl-CoA = 1-acyl-2-(5Z,8Z,11Z,14Z)-eicosatetraenoyl-sn-glycero-3-phosphoethanolamine + CoA. It catalyses the reaction 1-hexadecanoyl-sn-glycero-3-phosphoethanolamine + (5Z,8Z,11Z,14Z)-eicosatetraenoyl-CoA = 1-hexadecanoyl-2-(5Z,8Z,11Z,14Z-eicosatetraenoyl)-sn-glycero-3-phosphoethanolamine + CoA. It carries out the reaction 1-(9Z-octadecenoyl)-sn-glycero-3-phosphoethanolamine + (5Z,8Z,11Z,14Z)-eicosatetraenoyl-CoA = 1-(9Z)-octadecenoyl-2-(5Z,8Z,11Z,14Z)-eicosatetraenoyl-sn-glycero-3-phosphoethanolamine + CoA. The enzyme catalyses 1-(10Z-heptadecenoyl)-sn-glycero-3-phosphoethanolamine + (5Z,8Z,11Z,14Z)-eicosatetraenoyl-CoA = 1-(10Z-heptadecenoyl)-2-(5Z,8Z,11Z,14Z-eicosatetraenoyl)-sn-glycero-3-phosphoethanolamine + CoA. The catalysed reaction is a 1-O-(1Z-alkenyl)-sn-glycero-3-phosphoethanolamine + (5Z,8Z,11Z,14Z)-eicosatetraenoyl-CoA = 1-O-(1Z)-alkenyl-2-(5Z,8Z,11Z,14Z)-eicosatetraenoyl-sn-glycero-3-phosphoethanolamine + CoA. It catalyses the reaction a 1-acyl-sn-glycero-3-phospho-L-serine + (9Z,12Z)-octadecadienoyl-CoA = 1-acyl-2-(9Z,12Z-octadecadienoyl)-sn-glycero-3-phospho-L-serine + CoA. It carries out the reaction a 1-acyl-sn-glycero-3-phospho-L-serine + (5Z,8Z,11Z,14Z)-eicosatetraenoyl-CoA = 1-acyl-2-(5Z,8Z,11Z,14Z-eicosatetraenoyl)-sn-glycero-3-phospho-L-serine + CoA. The enzyme catalyses 1-hexadecanoyl-sn-glycero-3-phospho-L-serine + (9Z)-octadecenoyl-CoA = 1-hexadecanoyl-2-(9Z-octadecenoyl)-sn-glycero-3-phospho-L-serine + CoA. The catalysed reaction is 1-(9Z-octadecenoyl)-sn-glycero-3-phospho-L-serine + (9Z)-octadecenoyl-CoA = 1,2-di-(9Z)-octadecenoyl-sn-glycero-3-phospho-L-serine + CoA. It catalyses the reaction 1-hexadecanoyl-sn-glycero-3-phospho-L-serine + (9Z,12Z)-octadecadienoyl-CoA = 1-hexadecanoyl-2-(9Z,12Z-octadecadienoyl)-sn-glycero-3-phospho-L-serine + CoA. It carries out the reaction 1-(9Z-octadecenoyl)-sn-glycero-3-phospho-L-serine + (9Z,12Z)-octadecadienoyl-CoA = 1-(9Z-octadecenoyl)-2-(9Z,12Z-octadienoyl)-sn-glycero-3-phospho-L-serine + CoA. The enzyme catalyses 1-hexadecanoyl-sn-glycero-3-phospho-L-serine + (5Z,8Z,11Z,14Z)-eicosatetraenoyl-CoA = 1-hexadecanoyl-2-(5Z,8Z,11Z,14Z-eicosatetraenoyl)-sn-glycero-3-phospho-L-serine + CoA. The catalysed reaction is 1-(9Z-octadecenoyl)-sn-glycero-3-phospho-L-serine + (5Z,8Z,11Z,14Z)-eicosatetraenoyl-CoA = 1-(9Z-octadecenoyl)-2-(5Z,8Z,11Z,14Z-eicosatetraenoyl)-sn-glycero-3-phospho-L-serine + CoA. It functions in the pathway lipid metabolism; phospholipid metabolism. Lysophospholipid O-acyltransferase (LPLAT) that catalyzes the reacylation step of the phospholipid remodeling process also known as the Lands cycle. Catalyzes transfer of the fatty acyl chain from fatty acyl-CoA to 1-acyl lysophospholipid to form various classes of phospholipids. Converts 1-acyl lysophosphatidylcholine (LPC) into phosphatidylcholine (PC) (LPCAT activity), 1-acyl lysophosphatidylserine (LPS) into phosphatidylserine (PS) (LPSAT activity) and 1-acyl lysophosphatidylethanolamine (LPE) into phosphatidylethanolamine (PE) (LPEAT activity). Favors polyunsaturated fatty acyl-CoAs as acyl donors compared to saturated fatty acyl-CoAs. Has higher activity for LPC acyl acceptors compared to LPEs and LPSs. Can also transfer the fatty acyl chain from fatty acyl-CoA to 1-O-alkyl lysophospholipid or 1-O-alkenyl lysophospholipid with lower efficiency. Acts as a major LPC O-acyltransferase in liver and intestine. As a component of the liver X receptor/NR1H3 or NR1H2 signaling pathway, mainly catalyzes the incorporation of arachidonate into PCs of endoplasmic reticulum (ER) membranes, increasing membrane dynamics and enabling triacylglycerols transfer to nascent very low-density lipoprotein (VLDL) particles. Promotes processing of sterol regulatory protein SREBF1 in hepatocytes, likely by facilitating the translocation of SREBF1-SCAP complex from ER to the Golgi apparatus. Participates in mechanisms by which the liver X receptor/NR1H3 or NR1H2 signaling pathway counteracts lipid-induced ER stress response and inflammation. Down-regulates hepatic inflammation by limiting arachidonic acid availability for synthesis of inflammatory eicosanoids, such as prostaglandins. In enterocytes, acts as a component of a gut-brain feedback loop that coordinates dietary lipid absorption and food intake. Regulates the abundance of PCs containing linoleate and arachidonate in enterocyte membranes, enabling passive diffusion of fatty acids and cholesterol across the membrane for efficient chylomicron assembly. In the intestinal crypt, acts as a component of dietary-responsive phospholipid-cholesterol axis, regulating the biosynthesis of cholesterol and its mitogenic effects on intestinal stem cells. The sequence is that of Lysophospholipid acyltransferase 5 (Lpcat3) from Rattus norvegicus (Rat).